Here is a 1005-residue protein sequence, read N- to C-terminus: DNA-directed RNA polymerase subunit beta (1005 aa).

This sequence belongs to the RNA polymerase beta chain family. In plastids the minimal PEP RNA polymerase catalytic core is composed of four subunits: alpha, beta, beta', and beta''. When a (nuclear-encoded) sigma factor is associated with the core the holoenzyme is formed, which can initiate transcription (Potential).

It is found in the plastid. The protein resides in the apicoplast. The catalysed reaction is RNA(n) + a ribonucleoside 5'-triphosphate = RNA(n+1) + diphosphate. DNA-dependent RNA polymerase catalyzes the transcription of DNA into RNA using the four ribonucleoside triphosphates as substrates. In Theileria parva (East coast fever infection agent), this protein is DNA-directed RNA polymerase subunit beta (rpoB).